Consider the following 157-residue polypeptide: CASP-like protein 1 (157 aa).

Residues 1–13 are Cytoplasmic-facing; the sequence is MKTEARDGGSEWR. Residues 14–34 form a helical membrane-spanning segment; the sequence is WVAIFELFLRLAAIVSTSVAV. Topologically, residues 35–40 are extracellular; the sequence is YAAMGK. A helical membrane pass occupies residues 41–61; sequence IFVVAVNGVACFYLLMSLPVS. At 62-82 the chain is on the cytoplasmic side; the sequence is IFNIMRPHAYPANRVFLNIMD. The chain crosses the membrane as a helical span at residues 83–103; that stretch reads MVMVALVTAGALAAGIVYLVE. The Extracellular segment spans residues 104 to 121; the sequence is KAGNARASWVSVWSQFDS. Residues 122–142 traverse the membrane as a helical segment; the sequence is SSCFAVLALILHVLLSGVILY. The Cytoplasmic portion of the chain corresponds to 143–157; the sequence is KQALNIKFKKLDSVD.

It belongs to the Casparian strip membrane proteins (CASP) family. In terms of assembly, homodimer and heterodimers.

It is found in the cell membrane. The sequence is that of CASP-like protein 1 from Picea sitchensis (Sitka spruce).